We begin with the raw amino-acid sequence, 129 residues long: Ribulose bisphosphate carboxylase small subunit (129 aa).

The interval 109-129 (LRMTRTESNGRSQHYMWETQR) is disordered.

It belongs to the RuBisCO small chain family. Heterohexadecamer of 8 large and 8 small subunits.

Its function is as follows. RuBisCO catalyzes two reactions: the carboxylation of D-ribulose 1,5-bisphosphate, the primary event in carbon dioxide fixation, as well as the oxidative fragmentation of the pentose substrate. Both reactions occur simultaneously and in competition at the same active site. Although the small subunit is not catalytic it is essential for maximal activity. The chain is Ribulose bisphosphate carboxylase small subunit from Rhizobium meliloti (strain 1021) (Ensifer meliloti).